The following is a 616-amino-acid chain: 2-isopropylmalate synthase (616 aa).

Residues 1–34 (MSPNDAFISAPAKIETPVGPRNEGQPAWNKQRGS) are disordered. The 275-residue stretch at 67-341 (PQWCAVDLRD…DPQLDFTDIR (275 aa)) folds into the Pyruvate carboxyltransferase domain. 4 residues coordinate Mg(2+): D76, H280, H282, and N316. Residues 490-616 (RTAPVEQIAL…NHEAVLAGGV (127 aa)) form a regulatory domain region.

Belongs to the alpha-IPM synthase/homocitrate synthase family. LeuA type 2 subfamily. Homodimer. Mg(2+) serves as cofactor.

It is found in the cytoplasm. The enzyme catalyses 3-methyl-2-oxobutanoate + acetyl-CoA + H2O = (2S)-2-isopropylmalate + CoA + H(+). The protein operates within amino-acid biosynthesis; L-leucine biosynthesis; L-leucine from 3-methyl-2-oxobutanoate: step 1/4. With respect to regulation, inhibited by L-leucine, the pathway end product. Its function is as follows. Catalyzes the condensation of the acetyl group of acetyl-CoA with 3-methyl-2-oxobutanoate (2-ketoisovalerate) to form 3-carboxy-3-hydroxy-4-methylpentanoate (2-isopropylmalate). Complements an E.coli leuA deletion. This chain is 2-isopropylmalate synthase, found in Corynebacterium glutamicum (strain ATCC 13032 / DSM 20300 / JCM 1318 / BCRC 11384 / CCUG 27702 / LMG 3730 / NBRC 12168 / NCIMB 10025 / NRRL B-2784 / 534).